Reading from the N-terminus, the 556-residue chain is Dihydroxy-acid dehydratase (556 aa).

Aspartate 78 serves as a coordination point for Mg(2+). Residue cysteine 119 coordinates [2Fe-2S] cluster. Mg(2+) is bound by residues aspartate 120 and lysine 121. The residue at position 121 (lysine 121) is an N6-carboxylysine. Cysteine 191 serves as a coordination point for [2Fe-2S] cluster. Glutamate 442 serves as a coordination point for Mg(2+). Serine 468 serves as the catalytic Proton acceptor.

The protein belongs to the IlvD/Edd family. Homodimer. The cofactor is [2Fe-2S] cluster. It depends on Mg(2+) as a cofactor.

It catalyses the reaction (2R)-2,3-dihydroxy-3-methylbutanoate = 3-methyl-2-oxobutanoate + H2O. It carries out the reaction (2R,3R)-2,3-dihydroxy-3-methylpentanoate = (S)-3-methyl-2-oxopentanoate + H2O. It functions in the pathway amino-acid biosynthesis; L-isoleucine biosynthesis; L-isoleucine from 2-oxobutanoate: step 3/4. The protein operates within amino-acid biosynthesis; L-valine biosynthesis; L-valine from pyruvate: step 3/4. Functionally, functions in the biosynthesis of branched-chain amino acids. Catalyzes the dehydration of (2R,3R)-2,3-dihydroxy-3-methylpentanoate (2,3-dihydroxy-3-methylvalerate) into 2-oxo-3-methylpentanoate (2-oxo-3-methylvalerate) and of (2R)-2,3-dihydroxy-3-methylbutanoate (2,3-dihydroxyisovalerate) into 2-oxo-3-methylbutanoate (2-oxoisovalerate), the penultimate precursor to L-isoleucine and L-valine, respectively. In Clostridium beijerinckii (strain ATCC 51743 / NCIMB 8052) (Clostridium acetobutylicum), this protein is Dihydroxy-acid dehydratase.